Consider the following 62-residue polypeptide: Metallothionein (62 aa).

Methionine 1 is subject to N-acetylmethionine. The tract at residues 1-30 is beta; it reads MDPQDCKCETGASCSCGTTCSCSNCKCTSC. A divalent metal cation-binding residues include cysteine 6, cysteine 8, cysteine 14, cysteine 16, cysteine 20, cysteine 22, cysteine 25, cysteine 27, cysteine 30, cysteine 34, cysteine 35, cysteine 37, cysteine 38, cysteine 42, cysteine 45, cysteine 49, cysteine 51, cysteine 58, cysteine 60, and cysteine 61. An alpha region spans residues 31–62; the sequence is KKSCCSCCPAECSKCSQGCHCEKGSKKCSCCN.

Belongs to the metallothionein superfamily. Type 1 family.

In terms of biological role, metallothioneins have a high content of cysteine residues that bind various heavy metals. The polypeptide is Metallothionein (mt-a) (Xenopus laevis (African clawed frog)).